The chain runs to 316 residues: Olfactory receptor 51J1 (316 aa).

Over 1-31 the chain is Extracellular; the sequence is MKISNNSLGFLPTTFILVGIPGLESEHLWIS. N-linked (GlcNAc...) asparagine glycosylation is present at Asn-5. The chain crosses the membrane as a helical span at residues 32–52; sequence VPFSLIYIIIFLGNGIILHVI. The Cytoplasmic portion of the chain corresponds to 53–63; it reads RTDIALHQPMY. The helical transmembrane segment at 64-84 threads the bilayer; sequence LFLAMLALAEVRVSASTLPTV. The Extracellular segment spans residues 85–104; the sequence is LGIFLFGNTEISLEACLFPD. A disulfide bridge links Cys-100 with Cys-191. Residues 105–125 form a helical membrane-spanning segment; sequence VLHPFFIHDGASCAAGHVFGP. The Cytoplasmic portion of the chain corresponds to 126–161; it reads LYSHLQPTELHSYPDTAQGLWHRSYYRTEKHYAHGS. The chain crosses the membrane as a helical span at residues 162-182; the sequence is VAHSLMASALLWPQCPLTFLL. Residues 183–191 are Extracellular-facing; the sequence is SAPQSYLSC. Residues 192-212 traverse the membrane as a helical segment; it reads GNISVNNIYGIFIVTSTFGLD. The Cytoplasmic portion of the chain corresponds to 213 to 242; that stretch reads SLLIVISYGLILHTVLGIATGEGRKKALNT. The helical transmembrane segment at 243-263 threads the bilayer; that stretch reads CGSHVCAVLAYYVPMIGLSIV. The Extracellular segment spans residues 264-275; that stretch reads HRLGHRVSPLLQ. A helical transmembrane segment spans residues 276–296; that stretch reads AMMANAYLFFPPVVNPIVYSI. The Cytoplasmic portion of the chain corresponds to 297 to 316; the sequence is KTKEIHGAIVRMLLEKRRRV.

It belongs to the G-protein coupled receptor 1 family.

Its subcellular location is the cell membrane. In terms of biological role, odorant receptor. This Homo sapiens (Human) protein is Olfactory receptor 51J1 (OR51J1).